The sequence spans 480 residues: UDP-glucose 6-dehydrogenase 5 (480 aa).

NAD(+)-binding positions include 8 to 13, Asp-33, Arg-38, 86 to 90, 127 to 128, and Glu-161; these read GAGYVG, VNTPT, and ST. Substrate-binding positions include 157–161, 216–223, and 256–269; these read EFLAE, KLAANAFL, and RIGP…VGFG. Cys-272 acts as the Nucleophile in catalysis. NAD(+) is bound at residue 272–275; sequence CFQK. 334-335 contacts substrate; that stretch reads FK. An NAD(+)-binding site is contributed by Arg-342. The residue at position 393 (Ser-393) is a Phosphoserine. Position 447 (Arg-447) interacts with substrate.

This sequence belongs to the UDP-glucose/GDP-mannose dehydrogenase family.

It catalyses the reaction UDP-alpha-D-glucose + 2 NAD(+) + H2O = UDP-alpha-D-glucuronate + 2 NADH + 3 H(+). The protein operates within nucleotide-sugar biosynthesis; UDP-alpha-D-glucuronate biosynthesis; UDP-alpha-D-glucuronate from UDP-alpha-D-glucose: step 1/1. In terms of biological role, involved in the biosynthesis of UDP-glucuronic acid (UDP-GlcA), providing nucleotide sugars for cell-wall polymers. This Oryza sativa subsp. japonica (Rice) protein is UDP-glucose 6-dehydrogenase 5 (UGD5).